The primary structure comprises 83 residues: Conotoxin MiEr92 (83 aa).

An N-terminal signal peptide occupies residues 1–22 (MKLTCVLIVIMLFLTVCPLITA). The propeptide occupies 23-49 (DHSRDKQEHPAMRLKDRIRYLRRGKLT). Cystine bridges form between Cys-52–Cys-67, Cys-59–Cys-72, and Cys-66–Cys-81.

The protein belongs to the conotoxin O1 superfamily. Expressed by the venom duct.

The protein resides in the secreted. This chain is Conotoxin MiEr92, found in Conus miles (Soldier cone).